The primary structure comprises 1054 residues: Filament-like plant protein 6 (1054 aa).

Coiled coils occupy residues 64–139 (VQIK…VKQH), 174–200 (AEDR…KDHE), and 250–341 (SNML…RKKL). 2 disordered regions span residues 359-390 (RDSG…GSEF) and 448-506 (EAQL…KEKD). 3 stretches are compositionally biased toward low complexity: residues 371-380 (VKVSSPCKSP), 450-461 (QLQQNNSQKSSL), and 470-494 (SNPS…GSLS). Residues 389 to 463 (EFSLDNAQKF…NNSQKSSLEV (75 aa)) are a coiled coil. Coiled coils occupy residues 637 to 666 (QNLV…RIHD) and 788 to 944 (ESDS…IFVL). The segment at 951-1054 (FRPQPEQMRS…SRFFSSKSGY (104 aa)) is disordered. Residues 1007–1032 (PSDSETSDTTTSPSRVGSRLSRSGSS) show a composition bias toward low complexity.

Belongs to the FPP family. As to quaternary structure, interacts with WPP/MAF proteins.

This is Filament-like plant protein 6 (FPP6) from Arabidopsis thaliana (Mouse-ear cress).